A 156-amino-acid polypeptide reads, in one-letter code: 6,7-dimethyl-8-ribityllumazine synthase (156 aa).

Residues F23, 57-59 (SFE), and 81-83 (AVI) each bind 5-amino-6-(D-ribitylamino)uracil. (2S)-2-hydroxy-3-oxobutyl phosphate is bound at residue 86 to 87 (GT). The active-site Proton donor is the H89. A 5-amino-6-(D-ribitylamino)uracil-binding site is contributed by F114. R128 is a binding site for (2S)-2-hydroxy-3-oxobutyl phosphate.

The protein belongs to the DMRL synthase family. In terms of assembly, forms an icosahedral capsid composed of 60 subunits, arranged as a dodecamer of pentamers.

The enzyme catalyses (2S)-2-hydroxy-3-oxobutyl phosphate + 5-amino-6-(D-ribitylamino)uracil = 6,7-dimethyl-8-(1-D-ribityl)lumazine + phosphate + 2 H2O + H(+). It functions in the pathway cofactor biosynthesis; riboflavin biosynthesis; riboflavin from 2-hydroxy-3-oxobutyl phosphate and 5-amino-6-(D-ribitylamino)uracil: step 1/2. Its function is as follows. Catalyzes the formation of 6,7-dimethyl-8-ribityllumazine by condensation of 5-amino-6-(D-ribitylamino)uracil with 3,4-dihydroxy-2-butanone 4-phosphate. This is the penultimate step in the biosynthesis of riboflavin. This is 6,7-dimethyl-8-ribityllumazine synthase from Alkalilimnicola ehrlichii (strain ATCC BAA-1101 / DSM 17681 / MLHE-1).